The chain runs to 88 residues: Large ribosomal subunit protein eL31 (88 aa).

Belongs to the eukaryotic ribosomal protein eL31 family.

The sequence is that of Large ribosomal subunit protein eL31 (rpl31e) from Sulfurisphaera tokodaii (strain DSM 16993 / JCM 10545 / NBRC 100140 / 7) (Sulfolobus tokodaii).